A 108-amino-acid polypeptide reads, in one-letter code: MSIFQKIKKQIQDNIILIYMKGTPEAPSCGFSAQAVQALSFCGEKFAYVNILENPDIRSELPKYANWPTFPQLWIDGELIGGCSIILEMLENGELKKLILKVKKKYQT.

Positions 4 to 106 constitute a Glutaredoxin domain; that stretch reads FQKIKKQIQD…KLILKVKKKY (103 aa). K21 is a glutathione binding site. Residue C29 coordinates [2Fe-2S] cluster. Glutathione is bound by residues R58, F70, and 83–84; that span reads CS.

This sequence belongs to the glutaredoxin family. Monothiol subfamily. In terms of assembly, homodimer.

Its subcellular location is the cytoplasm. Monothiol glutaredoxin involved in the biogenesis of iron-sulfur clusters. This is Glutaredoxin 4 (grxD) from Buchnera aphidicola subsp. Acyrthosiphon pisum (strain APS) (Acyrthosiphon pisum symbiotic bacterium).